We begin with the raw amino-acid sequence, 91 residues long: MARMIHCAKLGKEAEGLDFPPLPGELGKRLYESVSKQAWQDWLKQQTMLINENRLNMADPRARQYLMKQTEKYFFGEGADQASGYVPPAQG.

The protein belongs to the Fe(2+)-trafficking protein family.

Could be a mediator in iron transactions between iron acquisition and iron-requiring processes, such as synthesis and/or repair of Fe-S clusters in biosynthetic enzymes. This Burkholderia mallei (strain NCTC 10247) protein is Probable Fe(2+)-trafficking protein.